The sequence spans 348 residues: Ricin B-like lectin R40C1 (348 aa).

The segment at 1–26 is disordered; sequence MFGFGHHGHHGQDQPPQHHGGGGGGA. One can recognise a Ricin B-type lectin domain in the interval 199–345; sequence TVRIFCKADE…CEGDNQRWKI (147 aa).

As to expression, expressed in roots and shoots.

Lectin which binds carbohydrates in vitro. Interacts through its lectin domain with glycan structures containing specific motifs. In Oryza sativa subsp. japonica (Rice), this protein is Ricin B-like lectin R40C1.